A 556-amino-acid chain; its full sequence is (6-4)DNA photolyase (556 aa).

The Photolyase/cryptochrome alpha/beta domain occupies 24–162 (SGSLIWFRKG…EVFSPVSHTL (139 aa)). Phosphate is bound at residue E262. FAD is bound by residues K263, 276–280 (TTVMS), 317–321 (QLLWR), 380–383 (WMHH), R386, 415–417 (DSD), and N421. Residue W320 coordinates DNA. An interaction with DNA region spans residues 382–387 (HHLARH). W427 provides a ligand contact to DNA. Residues 534-556 (LRRKLQKDEHEESKIRNQRPKLK) form a disordered region. Basic and acidic residues predominate over residues 539–548 (QKDEHEESKI).

The protein belongs to the DNA photolyase class-1 family. FAD is required as a cofactor. Expressed in siliques, flowers and leaves. Not detected in roots.

It catalyses the reaction (6-4) photoproduct (in DNA) = 2 pyrimidine residues (in DNA).. Functionally, involved in repair of UV radiation-induced DNA damage. Catalyzes the photoreactivation of pyrimidine [6-4] pyrimidone photoproduct (6-4 products). Binds specifically to DNA containing 6-4 products and repairs these lesions in a visible light-dependent manner. Not required for repair of cyclobutane pyrimidine dimer (CPD). The protein is (6-4)DNA photolyase (UVR3) of Arabidopsis thaliana (Mouse-ear cress).